We begin with the raw amino-acid sequence, 461 residues long: Photosystem II CP43 reaction center protein (461 aa).

Residues 1-2 (ME) constitute a propeptide that is removed on maturation. Thr3 bears the N-acetylthreonine mark. Residue Thr3 is modified to Phosphothreonine. 5 helical membrane passes run 57-81 (LFEV…PHLA), 122-143 (LLGP…KDRN), 166-188 (KALY…RKIT), 243-263 (KPFA…LSYS), and 279-300 (WFNN…ASQA). Glu355 is a binding site for [CaMn4O5] cluster. The helical transmembrane segment at 435 to 459 (RARAAAAGFEKGIDRDFEPVLSMTP) threads the bilayer.

This sequence belongs to the PsbB/PsbC family. PsbC subfamily. In terms of assembly, PSII is composed of 1 copy each of membrane proteins PsbA, PsbB, PsbC, PsbD, PsbE, PsbF, PsbH, PsbI, PsbJ, PsbK, PsbL, PsbM, PsbT, PsbX, PsbY, PsbZ, Psb30/Ycf12, at least 3 peripheral proteins of the oxygen-evolving complex and a large number of cofactors. It forms dimeric complexes. Requires Binds multiple chlorophylls and provides some of the ligands for the Ca-4Mn-5O cluster of the oxygen-evolving complex. It may also provide a ligand for a Cl- that is required for oxygen evolution. PSII binds additional chlorophylls, carotenoids and specific lipids. as cofactor.

The protein resides in the plastid. Its subcellular location is the chloroplast thylakoid membrane. Its function is as follows. One of the components of the core complex of photosystem II (PSII). It binds chlorophyll and helps catalyze the primary light-induced photochemical processes of PSII. PSII is a light-driven water:plastoquinone oxidoreductase, using light energy to abstract electrons from H(2)O, generating O(2) and a proton gradient subsequently used for ATP formation. In Platanus occidentalis (Sycamore), this protein is Photosystem II CP43 reaction center protein.